The chain runs to 379 residues: Cytochrome-c peroxidase IdrP1 (379 aa).

A signal peptide spans 1–24; sequence MNNRKPLQLSLLVASLAVAFTASA. Cytochrome c domains lie at 50–158 and 204–355; these read EKIA…DAFK and TSQK…EALS. 6 residues coordinate heme c: cysteine 72, cysteine 75, histidine 76, cysteine 219, cysteine 222, and histidine 223.

The iodate reductase (Idr) complex is composed of a molybdopterin-dependent iodate reductase (IdrA and IdrB subunits) and two associated peroxidases (IdrP1 and IdrP2). It depends on heme c as a cofactor.

Its subcellular location is the periplasm. The catalysed reaction is 2 Fe(II)-[cytochrome c] + H2O2 + 2 H(+) = 2 Fe(III)-[cytochrome c] + 2 H2O. Involved in iodate respiration. Probably reduces the H(2)O(2) produced by IdrA/IdrB to H(2)O, using a reduced cytochrome c as the electron donor. This chain is Cytochrome-c peroxidase IdrP1, found in Pseudomonas sp. (strain SCT).